The sequence spans 535 residues: Phosphoenolpyruvate carboxykinase (ATP) (535 aa).

3 residues coordinate substrate: Arg-59, Tyr-201, and Lys-207. ATP contacts are provided by residues Lys-207, His-226, and 243-251; that span reads GLSGTGKTT. Lys-207 and His-226 together coordinate Mn(2+). Residue Asp-264 coordinates Mn(2+). ATP contacts are provided by residues Glu-292, Arg-328, 444-445, and Thr-450; that span reads RI. A substrate-binding site is contributed by Arg-328.

Belongs to the phosphoenolpyruvate carboxykinase (ATP) family. Mn(2+) serves as cofactor.

It localises to the cytoplasm. It catalyses the reaction oxaloacetate + ATP = phosphoenolpyruvate + ADP + CO2. The protein operates within carbohydrate biosynthesis; gluconeogenesis. Involved in the gluconeogenesis. Catalyzes the conversion of oxaloacetate (OAA) to phosphoenolpyruvate (PEP) through direct phosphoryl transfer between the nucleoside triphosphate and OAA. This Parabacteroides distasonis (strain ATCC 8503 / DSM 20701 / CIP 104284 / JCM 5825 / NCTC 11152) protein is Phosphoenolpyruvate carboxykinase (ATP).